The chain runs to 548 residues: Acetamidase (548 aa).

Catalysis depends on charge relay system residues Lys129 and Ser204. Ser228 serves as the catalytic Acyl-ester intermediate.

It belongs to the amidase family.

The catalysed reaction is a monocarboxylic acid amide + H2O = a monocarboxylate + NH4(+). It catalyses the reaction acetamide + H2O = acetate + NH4(+). Functionally, allows acetamide to be used as a sole carbon or nitrogen source. This is Acetamidase (amdS) from Emericella nidulans (strain FGSC A4 / ATCC 38163 / CBS 112.46 / NRRL 194 / M139) (Aspergillus nidulans).